A 382-amino-acid chain; its full sequence is Succinate--CoA ligase [ADP-forming] subunit beta 1 (382 aa).

Positions Lys-9–Glu-235 constitute an ATP-grasp domain. ATP contacts are provided by residues Lys-45, Gly-52 to Gly-54, Glu-91, Leu-94, and Glu-99. Mg(2+)-binding residues include Asn-191 and Asp-204. Asn-255 lines the substrate pocket.

The protein belongs to the succinate/malate CoA ligase beta subunit family. In terms of assembly, heterotetramer of two alpha and two beta subunits. The cofactor is Mg(2+).

It catalyses the reaction succinate + ATP + CoA = succinyl-CoA + ADP + phosphate. The enzyme catalyses GTP + succinate + CoA = succinyl-CoA + GDP + phosphate. The protein operates within carbohydrate metabolism; tricarboxylic acid cycle; succinate from succinyl-CoA (ligase route): step 1/1. Succinyl-CoA synthetase functions in the citric acid cycle (TCA), coupling the hydrolysis of succinyl-CoA to the synthesis of either ATP or GTP and thus represents the only step of substrate-level phosphorylation in the TCA. The beta subunit provides nucleotide specificity of the enzyme and binds the substrate succinate, while the binding sites for coenzyme A and phosphate are found in the alpha subunit. The polypeptide is Succinate--CoA ligase [ADP-forming] subunit beta 1 (Archaeoglobus fulgidus (strain ATCC 49558 / DSM 4304 / JCM 9628 / NBRC 100126 / VC-16)).